A 147-amino-acid polypeptide reads, in one-letter code: Large ribosomal subunit protein uL15 (147 aa).

The disordered stretch occupies residues 1–62 (MDLSNLRPAI…GQMPLQRRLP (62 aa)). Composition is skewed to gly residues over residues 21–31 (RGPGSGNGKTA) and 42–52 (SGGGVKPGFEG).

The protein belongs to the universal ribosomal protein uL15 family. Part of the 50S ribosomal subunit.

Functionally, binds to the 23S rRNA. The sequence is that of Large ribosomal subunit protein uL15 from Syntrophotalea carbinolica (strain DSM 2380 / NBRC 103641 / GraBd1) (Pelobacter carbinolicus).